The chain runs to 474 residues: Protein anachronism (474 aa).

An N-terminal signal peptide occupies residues 1–33 (MASAMRGEKCERSRIRELVLILSLITMAGDSRA). Residues N54, N62, N73, N116, and N144 are each glycosylated (N-linked (GlcNAc...) asparagine). The disordered stretch occupies residues 173–195 (NPGQTREHNPGQASTQPISTENP). Residues 183–195 (GQASTQPISTENP) are compositionally biased toward polar residues. An N-linked (GlcNAc...) asparagine glycan is attached at N342. A compositionally biased stretch (polar residues) spans 359–372 (FIESTTSNSPTIDN). The interval 359–474 (FIESTTSNSP…HHRIPAHKQE (116 aa)) is disordered. 2 stretches are compositionally biased toward basic residues: residues 390-400 (LVHHRRHHHNH) and 437-474 (NHHRHRTGHHHPHHQLHQHHHHHHRHTKHHRIPAHKQE).

In terms of tissue distribution, synthesized in some glial cells and secreted.

The protein localises to the secreted. In terms of biological role, negatively regulates proliferation of neuronal precursor cells, thereby controlling the timing of postembryonic neurogenesis. This chain is Protein anachronism (ana), found in Drosophila melanogaster (Fruit fly).